The primary structure comprises 47 residues: Protein PsbN (47 aa).

The chain crosses the membrane as a helical span at residues 9 to 31 (YSLLIAMVTITFGLTGYGLYTAF).

The protein belongs to the PsbN family.

Its subcellular location is the cellular thylakoid membrane. In terms of biological role, may play a role in photosystem I and II biogenesis. The chain is Protein PsbN from Prochlorococcus marinus (strain MIT 9303).